The sequence spans 254 residues: Putative cysteine-rich repeat secretory protein 37 (254 aa).

The N-terminal stretch at 1 to 29 (MYSSYSLSKRLVSIPILAIQLLLIRSVSS) is a signal peptide. Gnk2-homologous domains are found at residues 36–138 (YLNH…SIRS) and 145–251 (YRNV…LYPF).

The protein belongs to the cysteine-rich repeat secretory protein family.

Its subcellular location is the secreted. This Arabidopsis thaliana (Mouse-ear cress) protein is Putative cysteine-rich repeat secretory protein 37 (CRRSP37).